The primary structure comprises 400 residues: Enoyl-[acyl-carrier-protein] reductase [NADH] (400 aa).

NAD(+)-binding positions include 48–53, 74–75, 111–112, and 139–140; these read GSSSGY, FE, DA, and LA. Residue Y225 coordinates substrate. Y235 (proton donor) is an active-site residue. Residues K244 and 273 to 275 each bind NAD(+); that span reads VVT.

It belongs to the TER reductase family. In terms of assembly, monomer.

It catalyses the reaction a 2,3-saturated acyl-[ACP] + NAD(+) = a (2E)-enoyl-[ACP] + NADH + H(+). It participates in lipid metabolism; fatty acid biosynthesis. Involved in the final reduction of the elongation cycle of fatty acid synthesis (FAS II). Catalyzes the reduction of a carbon-carbon double bond in an enoyl moiety that is covalently linked to an acyl carrier protein (ACP). The chain is Enoyl-[acyl-carrier-protein] reductase [NADH] from Shewanella loihica (strain ATCC BAA-1088 / PV-4).